Reading from the N-terminus, the 198-residue chain is Charged multivesicular body protein 2a homolog 2 (198 aa).

The stretch at 11–42 forms a coiled coil; that stretch reads KEVLRENQRNLNKSMREIDRERVALQNQEKKI.

This sequence belongs to the SNF7 family. In terms of assembly, probable core component of the endosomal sorting required for transport complex III (ESCRT-III). ESCRT-III components are thought to multimerize to form a flat lattice on the perimeter membrane of the endosome.

The protein resides in the endosome membrane. In terms of biological role, probable core component of the endosomal sorting required for transport complex III (ESCRT-III) which is involved in multivesicular bodies (MVBs) formation and sorting of endosomal cargo proteins into MVBs. MVBs contain intraluminal vesicles (ILVs) that are generated by invagination and scission from the limiting membrane of the endosome and are delivered to lysosomes enabling degradation of membrane proteins. The chain is Charged multivesicular body protein 2a homolog 2 (chmp2a2) from Dictyostelium discoideum (Social amoeba).